The primary structure comprises 82 residues: Escargot/snail protein homolog (82 aa).

4 C2H2-type zinc fingers span residues 1–5, 18–40, 44–66, and 72–82; these read HQQFH, FSCK…IRTH, CKCP…IRTH, and FSCQHCQSAFV.

This sequence belongs to the snail C2H2-type zinc-finger protein family.

It is found in the nucleus. This is Escargot/snail protein homolog from Calliphora vicina (Blue blowfly).